We begin with the raw amino-acid sequence, 236 residues long: MITLPARPESLTFAPQQSALIVVDMQNAYASQGGYLDLAGFDVSATRPVIDNINTAVAAARAAGMLIIWFQNGWDDQYVEAGGPGSPNYHKSNALKTMRQRPELQGKLLAKGGWDYQLVDELTPQEGDIVLPKPRYSGFFNTPLDSILRSRGIRHLVFTGIATNVCVESTLRDGFFLEYFGIVLEDATHQAGPAFAQQAALFNIETFFGWVSDVESFCHALSPATPLSLAKEKRYA.

The active-site Proton acceptor is aspartate 24. The active site involves lysine 133. The Nucleophile role is filled by cysteine 166.

Belongs to the isochorismatase family. RutB subfamily.

It carries out the reaction (Z)-3-ureidoacrylate + H2O + H(+) = (Z)-3-aminoacrylate + NH4(+) + CO2. The enzyme catalyses (Z)-3-ureidoacrylate + H2O = (Z)-3-aminoacrylate + carbamate + H(+). It catalyses the reaction (Z)-2-methylureidoacrylate + H2O + H(+) = (Z)-2-methylaminoacrylate + NH4(+) + CO2. Hydrolyzes ureidoacrylate to form aminoacrylate and carbamate. The carbamate hydrolyzes spontaneously, thereby releasing one of the nitrogen atoms of the pyrimidine ring as ammonia and one of its carbon atoms as CO2. This chain is Ureidoacrylate amidohydrolase RutB, found in Klebsiella variicola (strain At-22).